The chain runs to 217 residues: Elongation factor Ts (217 aa).

Residues 80–83 form an involved in Mg(2+) ion dislocation from EF-Tu region; it reads TDFV.

It belongs to the EF-Ts family.

The protein resides in the cytoplasm. In terms of biological role, associates with the EF-Tu.GDP complex and induces the exchange of GDP to GTP. It remains bound to the aminoacyl-tRNA.EF-Tu.GTP complex up to the GTP hydrolysis stage on the ribosome. This Carboxydothermus hydrogenoformans (strain ATCC BAA-161 / DSM 6008 / Z-2901) protein is Elongation factor Ts.